Here is a 73-residue protein sequence, read N- to C-terminus: Long neurotoxin 1 (73 aa).

5 disulfide bridges follow: cysteine 3-cysteine 21, cysteine 14-cysteine 42, cysteine 27-cysteine 31, cysteine 46-cysteine 57, and cysteine 58-cysteine 63.

It belongs to the three-finger toxin family. Long-chain subfamily. Type II alpha-neurotoxin sub-subfamily. In terms of tissue distribution, expressed by the venom gland.

It is found in the secreted. Its function is as follows. Binds with high affinity to muscular (alpha-1/CHRNA1) and neuronal (alpha-7/CHRNA7) nicotinic acetylcholine receptor (nAChR) and inhibits acetylcholine from binding to the receptor, thereby impairing neuromuscular and neuronal transmission. In Ophiophagus hannah (King cobra), this protein is Long neurotoxin 1.